Reading from the N-terminus, the 148-residue chain is Large ribosomal subunit protein uL22c (148 aa).

It belongs to the universal ribosomal protein uL22 family. As to quaternary structure, part of the 50S ribosomal subunit.

The protein localises to the plastid. The protein resides in the chloroplast. Its function is as follows. This protein binds specifically to 23S rRNA. The globular domain of the protein is located near the polypeptide exit tunnel on the outside of the subunit, while an extended beta-hairpin is found that lines the wall of the exit tunnel in the center of the 70S ribosome. This is Large ribosomal subunit protein uL22c (rpl22) from Zea mays (Maize).